A 529-amino-acid chain; its full sequence is Lysine--tRNA ligase (529 aa).

Residues 29–37 (ISGSVHIGN) carry the 'HIGH' region motif. The 'KMSKS' region motif lies at 274 to 278 (AMSKS). Lys277 is an ATP binding site.

This sequence belongs to the class-I aminoacyl-tRNA synthetase family.

The protein localises to the cytoplasm. The catalysed reaction is tRNA(Lys) + L-lysine + ATP = L-lysyl-tRNA(Lys) + AMP + diphosphate. In Methanosphaera stadtmanae (strain ATCC 43021 / DSM 3091 / JCM 11832 / MCB-3), this protein is Lysine--tRNA ligase.